A 130-amino-acid chain; its full sequence is Small ribosomal subunit protein uS9 (130 aa).

This sequence belongs to the universal ribosomal protein uS9 family.

This chain is Small ribosomal subunit protein uS9, found in Anaeromyxobacter dehalogenans (strain 2CP-1 / ATCC BAA-258).